Here is a 143-residue protein sequence, read N- to C-terminus: Flagellar assembly factor FliW (143 aa).

Belongs to the FliW family. Interacts with translational regulator CsrA and flagellin(s).

The protein resides in the cytoplasm. Acts as an anti-CsrA protein, binds CsrA and prevents it from repressing translation of its target genes, one of which is flagellin. Binds to flagellin and participates in the assembly of the flagellum. The sequence is that of Flagellar assembly factor FliW from Clostridium botulinum (strain Langeland / NCTC 10281 / Type F).